Reading from the N-terminus, the 288-residue chain is HTH-type transcriptional regulator CzcR (288 aa).

The HTH lysR-type domain maps to 1–58; that stretch reads MELRDLQIFQSVADQGSVSSAAKELNYVQSNVTARIKQLENELKTPLFYRHKRGMTLT. A DNA-binding region (H-T-H motif) is located at residues 18-37; that stretch reads VSSAAKELNYVQSNVTARIK.

The protein belongs to the LysR transcriptional regulatory family.

This Bacillus cereus (strain ATCC 10987 / NRS 248) protein is HTH-type transcriptional regulator CzcR (czcR).